Consider the following 248-residue polypeptide: Ribosomal RNA small subunit methyltransferase A (248 aa).

6 residues coordinate S-adenosyl-L-methionine: His11, Leu13, Gly38, Glu60, Asp83, and Asn101.

The protein belongs to the class I-like SAM-binding methyltransferase superfamily. rRNA adenine N(6)-methyltransferase family. RsmA subfamily.

The protein resides in the cytoplasm. It catalyses the reaction adenosine(1518)/adenosine(1519) in 16S rRNA + 4 S-adenosyl-L-methionine = N(6)-dimethyladenosine(1518)/N(6)-dimethyladenosine(1519) in 16S rRNA + 4 S-adenosyl-L-homocysteine + 4 H(+). Functionally, specifically dimethylates two adjacent adenosines (A1518 and A1519) in the loop of a conserved hairpin near the 3'-end of 16S rRNA in the 30S particle. May play a critical role in biogenesis of 30S subunits. In Aquifex aeolicus (strain VF5), this protein is Ribosomal RNA small subunit methyltransferase A.